Reading from the N-terminus, the 241-residue chain is Dolichol-phosphate mannosyltransferase subunit 1 (241 aa).

Positions 13, 15, 17, 44, 46, 99, 100, 101, 128, 215, and 221 each coordinate GDP-alpha-D-mannose. A Mg(2+)-binding site is contributed by Asp101. Asp101 is a binding site for Mn(2+).

This sequence belongs to the glycosyltransferase 2 family. Mg(2+) serves as cofactor. Mn(2+) is required as a cofactor. Requires Ca(2+) as cofactor.

It is found in the endoplasmic reticulum. It catalyses the reaction a di-trans,poly-cis-dolichyl phosphate + GDP-alpha-D-mannose = a di-trans,poly-cis-dolichyl beta-D-mannosyl phosphate + GDP. It functions in the pathway protein modification; protein glycosylation. Its function is as follows. Transfers mannose from GDP-mannose to dolichol monophosphate to form dolichol phosphate mannose (Dol-P-Man) which is the mannosyl donor in pathways leading to N-glycosylation, glycosyl phosphatidylinositol membrane anchoring, and O-mannosylation of proteins. The protein is Dolichol-phosphate mannosyltransferase subunit 1 of Drosophila melanogaster (Fruit fly).